The chain runs to 68 residues: Disintegrin EMF10B (68 aa).

The 68-residue stretch at 1 to 68 (ELLQNSGNPC…SDCPRNPVFK (68 aa)) folds into the Disintegrin domain. 4 disulfides stabilise this stretch: Cys-10-Cys-33, Cys-24-Cys-30, Cys-29-Cys-54, and Cys-42-Cys-61. Positions 46 to 48 (MGD) match the Cell attachment site; atypical (MGD) motif.

The protein belongs to the venom metalloproteinase (M12B) family. P-II subfamily. P-IIe sub-subfamily. Heterodimer with EMF10A; disulfide-linked. In terms of tissue distribution, expressed by the venom gland.

It localises to the secreted. Functionally, extremely potent and selective inhibitor of integrin alpha-5/beta-1 (ITGA5/ITGB1). Partially inhibits adhesion of cells expressing alpha-IIb/beta-3 (ITGA2B/ITGB3), alpha-V/beta-3 (ITGAV/ITGB3), and alpha-4/beta-1 (ITGA4/ITGB1) to appropriate ligands only at concentration higher than 500 nM. Weakly inhibits ADP-induced platelet aggregation. The chain is Disintegrin EMF10B from Eristicophis macmahoni (Leaf-nosed viper).